The sequence spans 265 residues: Glutamate racemase (265 aa).

Substrate contacts are provided by residues 12 to 13 (DS) and 44 to 45 (YG). The Proton donor/acceptor role is filled by cysteine 75. 76-77 (NT) lines the substrate pocket. Cysteine 186 (proton donor/acceptor) is an active-site residue. Residue 187 to 188 (TH) participates in substrate binding.

The protein belongs to the aspartate/glutamate racemases family.

It carries out the reaction L-glutamate = D-glutamate. It functions in the pathway cell wall biogenesis; peptidoglycan biosynthesis. In terms of biological role, provides the (R)-glutamate required for cell wall biosynthesis. The chain is Glutamate racemase from Pseudomonas putida (strain W619).